The following is a 139-amino-acid chain: Large ribosomal subunit protein uL16 (139 aa).

A compositionally biased stretch (basic residues) spans 1–20 (MLIPRRVKHRKQHHPKRRGQ). Residues 1–25 (MLIPRRVKHRKQHHPKRRGQAKGGT) are disordered.

It belongs to the universal ribosomal protein uL16 family. As to quaternary structure, part of the 50S ribosomal subunit.

Binds 23S rRNA and is also seen to make contacts with the A and possibly P site tRNAs. This chain is Large ribosomal subunit protein uL16, found in Streptomyces avermitilis (strain ATCC 31267 / DSM 46492 / JCM 5070 / NBRC 14893 / NCIMB 12804 / NRRL 8165 / MA-4680).